The chain runs to 178 residues: CCHC-type zinc finger nucleic acid binding protein (178 aa).

N-acetylserine is present on Ser2. Residues 4-21 (NECFKCGRSGHWARECPT) form a CCHC-type 1 zinc finger. Lys8 bears the N6-acetyllysine mark. Arg25 and Arg27 each carry omega-N-methylarginine; by PRMT1. The segment at 25–38 (RGRGMRSRGRGGFT) is RNA-binding Arg/Gly-rich region (RGG-box). Residues Arg32 and Arg34 each carry the omega-N-methylarginine modification. At Ser49 the chain carries Phosphoserine. 6 consecutive CCHC-type zinc fingers follow at residues 52–69 (DICY…DCDL), 72–90 (DEAC…DCKE), 97–114 (QCCY…DCDH), 118–135 (QKCY…DCTK), 136–153 (VKCY…NCSK), and 157–174 (VNCY…ECTI). Asp72, Gly79, and Arg80 each carry omega-N-methylarginine.

Associates with the 40S ribosomal subunit, the 80S ribosome and with polysomes. Post-translationally, arginine methylation by PRMT1 in the Arg/Gly-rich region impedes RNA binding.

The protein localises to the nucleus. It is found in the cytoplasm. The protein resides in the endoplasmic reticulum. Single-stranded DNA-binding protein that preferentially binds to the sterol regulatory element (SRE) sequence 5'-GTGCGGTG-3', and thereby mediates transcriptional repression. Has a role as transactivator of the Myc promoter. Binds single-stranded RNA in a sequence-specific manner. Binds G-rich elements in target mRNA coding sequences. Prevents G-quadruplex structure formation in vitro, suggesting a role in supporting translation by resolving stable structures on mRNAs. The sequence is that of CCHC-type zinc finger nucleic acid binding protein from Mus musculus (Mouse).